Consider the following 269-residue polypeptide: Protein-L-isoaspartate O-methyltransferase (269 aa).

Residues 1–53 form a disordered region; sequence MSAGQRPAPKFPLRLDQVKPAGRSGAAPLLRPQRPLHQAATERGRGTTPAGLG. Ser-113 is a catalytic residue.

This sequence belongs to the methyltransferase superfamily. L-isoaspartyl/D-aspartyl protein methyltransferase family.

It is found in the cytoplasm. It carries out the reaction [protein]-L-isoaspartate + S-adenosyl-L-methionine = [protein]-L-isoaspartate alpha-methyl ester + S-adenosyl-L-homocysteine. In terms of biological role, catalyzes the methyl esterification of L-isoaspartyl residues in peptides and proteins that result from spontaneous decomposition of normal L-aspartyl and L-asparaginyl residues. It plays a role in the repair and/or degradation of damaged proteins. The sequence is that of Protein-L-isoaspartate O-methyltransferase from Methylibium petroleiphilum (strain ATCC BAA-1232 / LMG 22953 / PM1).